The following is a 246-amino-acid chain: Probable transcriptional regulatory protein Teth39_1009 (246 aa).

The tract at residues 1 to 21 is disordered; that stretch reads MSGHSKWANIKHKKEKMDAKK.

The protein belongs to the TACO1 family.

The protein localises to the cytoplasm. This chain is Probable transcriptional regulatory protein Teth39_1009, found in Thermoanaerobacter pseudethanolicus (strain ATCC 33223 / 39E) (Clostridium thermohydrosulfuricum).